A 379-amino-acid chain; its full sequence is AT-rich binding protein (379 aa).

The segment at 29–52 (IVCHTCQEELQTQDQFWKHIQDEH) adopts a C2H2-type 1 zinc-finger fold. The segment covering 114-124 (EQREVELHEAH) has biased composition (basic and acidic residues). Disordered stretches follow at residues 114-148 (EQRE…DAAK) and 221-267 (PTAS…STTL). 3 stretches are compositionally biased toward low complexity: residues 125–143 (QQQQ…QQQQ), 223–242 (ASFV…TTPP), and 249–262 (QQQQ…QQQQ). C2H2-type zinc fingers lie at residues 312 to 336 (YICD…RVVH) and 342 to 365 (FNCD…KKKH).

The protein localises to the nucleus. Functionally, may be a transcription factor for genes having (A+T) stretches in their promoter and/or enhancer regions. Binds to AT rich DNA. The sequence is that of AT-rich binding protein from Drosophila willistoni (Fruit fly).